Reading from the N-terminus, the 301-residue chain is GTPase Era (301 aa).

In terms of domain architecture, Era-type G spans 7 to 175 (YCGFIAIVGR…ASIVRKHLPE (169 aa)). The interval 15 to 22 (GRPNVGKS) is G1. 15–22 (GRPNVGKS) serves as a coordination point for GTP. The interval 41–45 (QTTRH) is G2. Positions 62-65 (DTPG) are G3. GTP contacts are provided by residues 62–66 (DTPGL) and 124–127 (NKVD). Residues 124–127 (NKVD) form a G4 region. The interval 154–156 (ISA) is G5. The KH type-2 domain maps to 206-283 (LGAELPYSVT…HLELWVKVKS (78 aa)).

The protein belongs to the TRAFAC class TrmE-Era-EngA-EngB-Septin-like GTPase superfamily. Era GTPase family. In terms of assembly, monomer.

It localises to the cytoplasm. Its subcellular location is the cell inner membrane. Its function is as follows. An essential GTPase that binds both GDP and GTP, with rapid nucleotide exchange. Plays a role in 16S rRNA processing and 30S ribosomal subunit biogenesis and possibly also in cell cycle regulation and energy metabolism. This is GTPase Era from Salmonella arizonae (strain ATCC BAA-731 / CDC346-86 / RSK2980).